The primary structure comprises 353 residues: Lactosylceramide 4-alpha-galactosyltransferase (353 aa).

Topologically, residues 1–22 (MSKPPDLLLRLLRGAPRQRVCT) are cytoplasmic. The helical; Signal-anchor for type II membrane protein transmembrane segment at 23–43 (LFIIGFKFTFFVSIMIYWHVV) threads the bilayer. Residues 44–353 (GEPKEKGQLY…TTHEAMKMYL (310 aa)) lie on the Lumenal side of the membrane. An N-linked (GlcNAc...) asparagine glycan is attached at Asn121. Residues 192–194 (DTD) carry the DXD motif motif. N-linked (GlcNAc...) asparagine glycosylation occurs at Asn203.

It belongs to the glycosyltransferase 32 family.

It is found in the golgi apparatus membrane. It carries out the reaction a beta-D-Gal-(1-&gt;4)-beta-D-Glc-(1&lt;-&gt;1)-Cer(d18:1(4E)) + UDP-alpha-D-galactose = a globoside Gb3Cer (d18:1(4E)) + UDP + H(+). The enzyme catalyses a beta-D-Gal-(1&lt;-&gt;1')-ceramide + UDP-alpha-D-galactose = alpha-D-Gal-(1-&gt;4)-beta-D-Gal-(1&lt;-&gt;1')-Cer + UDP + H(+). Its pathway is glycolipid biosynthesis. Its function is as follows. Catalyzes the transfer of galactose from UDP-alpha-D-galactose to lactosylceramide/beta-D-galactosyl-(1-&gt;4)-beta-D-glucosyl-(1&lt;-&gt;1)-ceramide(d18:1(4E)) to produce globotriaosylceramide/globoside Gb3Cer (d18:1(4E)). Also able to transfer galactose to galactosylceramide/beta-D-Gal-(1&lt;-&gt;1')-Cer. Globoside Gb3Cer is a glycosphingolipid of the globo serie, one of the major types of neutral root structures of glycosphingolipids, that constitute a significant portion of mammalian cell membranes. This chain is Lactosylceramide 4-alpha-galactosyltransferase (A4GALT), found in Pan troglodytes (Chimpanzee).